The sequence spans 83 residues: Cytochrome c-554(548) (83 aa).

Heme c-binding residues include Cys-14, Cys-17, His-18, and Met-63.

In terms of assembly, homodimer. Post-translationally, binds 1 heme c group covalently per subunit.

This Halomonas halodenitrificans (strain ATCC 12084 / NCIMB 8669) (Paracoccus halodenitrificans) protein is Cytochrome c-554(548).